The following is a 275-amino-acid chain: Octanoyl-[GcvH]:protein N-octanoyltransferase (275 aa).

A BPL/LPL catalytic domain is found at 42-246 (GQSQPVVRLW…ALQAFGSRLE (205 aa)). The Acyl-thioester intermediate role is filled by cysteine 145.

This sequence belongs to the octanoyltransferase LipL family.

It carries out the reaction N(6)-octanoyl-L-lysyl-[glycine-cleavage complex H protein] + L-lysyl-[lipoyl-carrier protein] = N(6)-octanoyl-L-lysyl-[lipoyl-carrier protein] + L-lysyl-[glycine-cleavage complex H protein]. Its pathway is protein modification; protein lipoylation via endogenous pathway; protein N(6)-(lipoyl)lysine from octanoyl-[acyl-carrier-protein]. Its function is as follows. Catalyzes the amidotransfer (transamidation) of the octanoyl moiety from octanoyl-GcvH to the lipoyl domain of the E2 subunit of lipoate-dependent enzymes. This is Octanoyl-[GcvH]:protein N-octanoyltransferase from Anoxybacillus flavithermus (strain DSM 21510 / WK1).